The following is a 241-amino-acid chain: Synaptogyrin (241 aa).

In terms of domain architecture, MARVEL spans 30 to 179 (FAMKPQVVIR…CALMAYKRFL (150 aa)). The next 4 helical transmembrane spans lie at 34–54 (PQVV…GCIS), 81–101 (MVGV…FLFE), 115–135 (ADMG…LYLW), and 155–175 (TAIW…LMAY). Positions 216-241 (ASPFGQPQQGGMEQQQSGMEYQQPTY) are disordered. Residues 220–241 (GQPQQGGMEQQQSGMEYQQPTY) are compositionally biased toward low complexity.

Belongs to the synaptogyrin family.

Its subcellular location is the cytoplasmic vesicle membrane. The protein localises to the cytoplasmic vesicle. It localises to the secretory vesicle membrane. The protein resides in the secretory vesicle. It is found in the synaptic vesicle membrane. Functionally, required for the correct formation of synaptic vesicles at nerve terminals and has a role in the regulation of the synaptic vesicle exo-endocytic cycle. The polypeptide is Synaptogyrin (Drosophila melanogaster (Fruit fly)).